The sequence spans 238 residues: Purine nucleoside phosphorylase DeoD-type (238 aa).

His4 provides a ligand contact to a purine D-ribonucleoside. Residues Gly20, Arg24, Arg43, and 87–90 (RVGS) contribute to the phosphate site. Residues 179-181 (EME) and 203-204 (SD) each bind a purine D-ribonucleoside. Catalysis depends on Asp204, which acts as the Proton donor.

This sequence belongs to the PNP/UDP phosphorylase family. In terms of assembly, homohexamer; trimer of homodimers.

The catalysed reaction is a purine D-ribonucleoside + phosphate = a purine nucleobase + alpha-D-ribose 1-phosphate. The enzyme catalyses a purine 2'-deoxy-D-ribonucleoside + phosphate = a purine nucleobase + 2-deoxy-alpha-D-ribose 1-phosphate. Its function is as follows. Catalyzes the reversible phosphorolytic breakdown of the N-glycosidic bond in the beta-(deoxy)ribonucleoside molecules, with the formation of the corresponding free purine bases and pentose-1-phosphate. The protein is Purine nucleoside phosphorylase DeoD-type of Haemophilus influenzae (strain PittEE).